A 483-amino-acid polypeptide reads, in one-letter code: 23S rRNA (uracil(1939)-C(5))-methyltransferase RlmD (483 aa).

Residues 1–11 (MTGLGKRRPAR) show a composition bias toward basic residues. The segment at 1–36 (MTGLGKRRPARSRSGVSGLRERRQPASVERSAGSEG) is disordered. Positions 29–90 (ERSAGSEGRR…KRFDEAHVSE (62 aa)) constitute a TRAM domain. 4 residues coordinate [4Fe-4S] cluster: Cys-103, Cys-109, Cys-112, and Cys-189. 6 residues coordinate S-adenosyl-L-methionine: Gln-298, Phe-332, Asn-337, Glu-353, Asp-379, and Asp-401. Residue Cys-427 is the Nucleophile of the active site.

It belongs to the class I-like SAM-binding methyltransferase superfamily. RNA M5U methyltransferase family. RlmD subfamily.

The catalysed reaction is uridine(1939) in 23S rRNA + S-adenosyl-L-methionine = 5-methyluridine(1939) in 23S rRNA + S-adenosyl-L-homocysteine + H(+). In terms of biological role, catalyzes the formation of 5-methyl-uridine at position 1939 (m5U1939) in 23S rRNA. The sequence is that of 23S rRNA (uracil(1939)-C(5))-methyltransferase RlmD from Halomonas elongata (strain ATCC 33173 / DSM 2581 / NBRC 15536 / NCIMB 2198 / 1H9).